The sequence spans 340 residues: Holliday junction branch migration complex subunit RuvB (340 aa).

The interval 1–182 is large ATPase domain (RuvB-L); that stretch reads MSDIDPTVRA…FGIPTRLQFY (182 aa). ATP-binding positions include L21, R22, G63, K66, T67, T68, 129-131, R172, Y182, and R219; that span reads EDF. Mg(2+) is bound at residue T67. The segment at 183-253 is small ATPAse domain (RuvB-S); it reads TEDELFIIVD…LADMALNRLG (71 aa). The head domain (RuvB-H) stretch occupies residues 256–340; that stretch reads HLGLDGADRR…PRAQTDLFEG (85 aa). DNA is bound by residues R292, R311, and R316.

This sequence belongs to the RuvB family. As to quaternary structure, homohexamer. Forms an RuvA(8)-RuvB(12)-Holliday junction (HJ) complex. HJ DNA is sandwiched between 2 RuvA tetramers; dsDNA enters through RuvA and exits via RuvB. An RuvB hexamer assembles on each DNA strand where it exits the tetramer. Each RuvB hexamer is contacted by two RuvA subunits (via domain III) on 2 adjacent RuvB subunits; this complex drives branch migration. In the full resolvosome a probable DNA-RuvA(4)-RuvB(12)-RuvC(2) complex forms which resolves the HJ.

It localises to the cytoplasm. It carries out the reaction ATP + H2O = ADP + phosphate + H(+). In terms of biological role, the RuvA-RuvB-RuvC complex processes Holliday junction (HJ) DNA during genetic recombination and DNA repair, while the RuvA-RuvB complex plays an important role in the rescue of blocked DNA replication forks via replication fork reversal (RFR). RuvA specifically binds to HJ cruciform DNA, conferring on it an open structure. The RuvB hexamer acts as an ATP-dependent pump, pulling dsDNA into and through the RuvAB complex. RuvB forms 2 homohexamers on either side of HJ DNA bound by 1 or 2 RuvA tetramers; 4 subunits per hexamer contact DNA at a time. Coordinated motions by a converter formed by DNA-disengaged RuvB subunits stimulates ATP hydrolysis and nucleotide exchange. Immobilization of the converter enables RuvB to convert the ATP-contained energy into a lever motion, pulling 2 nucleotides of DNA out of the RuvA tetramer per ATP hydrolyzed, thus driving DNA branch migration. The RuvB motors rotate together with the DNA substrate, which together with the progressing nucleotide cycle form the mechanistic basis for DNA recombination by continuous HJ branch migration. Branch migration allows RuvC to scan DNA until it finds its consensus sequence, where it cleaves and resolves cruciform DNA. This chain is Holliday junction branch migration complex subunit RuvB, found in Roseobacter denitrificans (strain ATCC 33942 / OCh 114) (Erythrobacter sp. (strain OCh 114)).